Here is a 493-residue protein sequence, read N- to C-terminus: Non-cyanogenic beta-glucosidase (493 aa).

An N-terminal signal peptide occupies residues 1–18 (MDFIVAIFALFVISSFTI). N-linked (GlcNAc...) asparagine glycosylation occurs at Asn34. A beta-D-glucoside is bound by residues Gln54, His158, and 203–204 (NE). Glu204 serves as the catalytic Proton donor. Asn335 is a glycosylation site (N-linked (GlcNAc...) asparagine). Residue Tyr346 participates in a beta-D-glucoside binding. N-linked (GlcNAc...) asparagine glycosylation is found at Asn371 and Asn412. A beta-D-glucoside-binding positions include Glu422, Trp471, 478 to 479 (EW), and Phe487. Glu422 acts as the Nucleophile in catalysis.

Belongs to the glycosyl hydrolase 1 family. As to expression, leaves.

The catalysed reaction is Hydrolysis of terminal, non-reducing beta-D-glucosyl residues with release of beta-D-glucose.. In Trifolium repens (Creeping white clover), this protein is Non-cyanogenic beta-glucosidase.